The chain runs to 69 residues: Large ribosomal subunit protein uL29 (69 aa).

The protein belongs to the universal ribosomal protein uL29 family.

In Clostridium perfringens (strain ATCC 13124 / DSM 756 / JCM 1290 / NCIMB 6125 / NCTC 8237 / Type A), this protein is Large ribosomal subunit protein uL29.